Here is a 523-residue protein sequence, read N- to C-terminus: 2-hydroxyisoflavanone synthase (523 aa).

Residues 2 to 22 (LVELAITLLVIALFIHLRPTL) form a helical membrane-spanning segment. C450 is a heme binding site.

This sequence belongs to the cytochrome P450 family. Heme is required as a cofactor.

The protein localises to the microsome membrane. The catalysed reaction is (2S)-liquiritigenin + reduced [NADPH--hemoprotein reductase] + O2 = (2R,3S)-2,4',7-trihydroxyisoflavanone + oxidized [NADPH--hemoprotein reductase] + H2O + H(+). The enzyme catalyses (2S)-naringenin + reduced [NADPH--hemoprotein reductase] + O2 = 2-hydroxy-2,3-dihydrogenistein + oxidized [NADPH--hemoprotein reductase] + H2O + H(+). In terms of biological role, 2-hydroxyisoflavanone synthase, which catalyzes the hydroxylation associated with 1,2-aryl migration of flavanones. Converts liquiritigenin and naringenin into highly unstable precursors of the isoflavones daidzein and genistein. Acts only on substrates with (2S)-chirality. This Glycyrrhiza echinata (Licorice) protein is 2-hydroxyisoflavanone synthase (CYP93C2).